The sequence spans 778 residues: Protein PHOTOPERIODIC CONTROL OF HYPOCOTYL 1 (778 aa).

Disordered stretches follow at residues 74-95 (QKRE…VGSS), 186-283 (HNRG…NSAT), and 316-335 (KTSP…KEAS). The span at 198–212 (SSKDTQEDGPRKNES) shows a compositional bias: basic and acidic residues. Over residues 230–247 (SGSISSSSTKGKGIKGYS) the composition is skewed to low complexity. A compositionally biased stretch (basic and acidic residues) spans 265–275 (PDRENSVDGHQ). Residues 317–326 (TSPSDSSETK) show a composition bias toward polar residues. Residues 470 to 505 (WPLLPNDLLELIMGHLETSFEIFLFRSVCSSWRSVV) enclose the F-box domain.

In terms of assembly, interacts with light-activated phyB. Binds directly to PIF1 and COP1. In terms of processing, ubiquitinated by COP1 in darkness; this leads to proteasomal degradation. As to expression, mainly expressed in cotyledons, hypocotyls, leaves and roots.

It is found in the nucleus. In terms of biological role, together with PCHL, regulates growth and development adaptation to the ambient environment by controlling negatively phytochrome B (phyB) dark reversion, a temperature-dependent thermal relaxation process during which phyB reverts from the active to the inactive state. Contributes to red (R) light-triggered photomorphogenesis. Promotes various light responses such as seed germination, hypocotyl gravitropism and chlorophyll biosynthesis, via direct interaction with PIF1 and COP1. Prevents DNA-binding ability of PIF1 to negatively regulate the expressions of its target genes. Facilitates the physical interaction between phyB and PIF1 and the subsequent light-induced degradation of PIF1. In Arabidopsis thaliana (Mouse-ear cress), this protein is Protein PHOTOPERIODIC CONTROL OF HYPOCOTYL 1.